A 364-amino-acid chain; its full sequence is MHPQVVILSLILHLADSVAGSVKVGGEAGPSVTLPCHYSGAVTSMCWNRGSCSLFTCQNGIVWTNGTHVTYRKDTRYKLLGDLSRRDVSLTIENTAVSDSGVYCCRVEHRGWFNDMKITVSLEIVPPKVTTTPIVTTVPTVTTVRTSTTVPTTTTVPMTTVPTTTVPTTMSIPTTTTVLTTMTVSTTTSVPTTTSIPTTTSVPVTTTVSTFVPPMPLPRQNHEPVATSPSSPQPAETHPTTLQGAIRREPTSSPLYSYTTDGNDTVTESSDGLWNNNQTQLFLEHSLLTANTTKGIYAGVCISVLVLLALLGVIIAKKYFFKKEVQQLSVSFSSLQIKALQNAVEKEVQAEDNIYIENSLYATD.

Residues 1–20 form the signal peptide; sequence MHPQVVILSLILHLADSVAG. The Ig-like V-type domain occupies 21–121; that stretch reads SVKVGGEAGP…WFNDMKITVS (101 aa). Residues 21–295 lie on the Extracellular side of the membrane; it reads SVKVGGEAGP…SLLTANTTKG (275 aa). Intrachain disulfides connect cysteine 36–cysteine 105, cysteine 46–cysteine 57, and cysteine 52–cysteine 104. A glycan (N-linked (GlcNAc...) asparagine) is linked at asparagine 65. A run of 12 repeats spans residues 138-143, 144-149, 150-155, 156-160, 161-165, 166-171, 172-177, 178-183, 184-189, 190-195, 196-201, and 202-207. Positions 138 to 207 are 12 X 6 AA approximate tandem repeats of V-P-T-T-T-T]; that stretch reads VPTVTTVRTS…TTTSVPVTTT (70 aa). The segment at 216-257 is disordered; the sequence is PLPRQNHEPVATSPSSPQPAETHPTTLQGAIRREPTSSPLYS. The segment covering 227–243 has biased composition (polar residues); the sequence is TSPSSPQPAETHPTTLQ. Residues asparagine 263, asparagine 277, and asparagine 291 are each glycosylated (N-linked (GlcNAc...) asparagine). Residues 296–316 form a helical membrane-spanning segment; it reads IYAGVCISVLVLLALLGVIIA. Topologically, residues 317 to 364 are cytoplasmic; it reads KKYFFKKEVQQLSVSFSSLQIKALQNAVEKEVQAEDNIYIENSLYATD. Residues lysine 338 and lysine 346 each participate in a glycyl lysine isopeptide (Lys-Gly) (interchain with G-Cter in ubiquitin) cross-link.

Belongs to the immunoglobulin superfamily. TIM family. As to quaternary structure, interacts with STAM. Interacts with SELPLG. (Microbial infection) Interacts with hepatitis A virus capsid proteins. In terms of assembly, (Microbial infection) Interacts with Ebolavirus envelope glycoprotein GP. As to quaternary structure, (Microbial infection) Interacts with Zika virus envelope protein E. In terms of processing, ubiquitinated at two lysine residues Lys-338 and Lys-346 on its cytoplasmic domain. Ubiquitination promotes receptor endocytosis and target receptors for lysosomal degradation and termination of receptor signaling. Post-translationally, (Microbial infection) Ubiquitination is required for Dengue virus endocytosis. As to expression, widely expressed, with highest levels in kidney and testis. Expressed by activated CD4+ T-cells during the development of helper T-cells responses.

It is found in the cell membrane. Functionally, phosphatidylserine receptor that plays an important functional role in regulatory B-cells homeostasis including generation, expansion and suppressor functions. As P-selectin/SELPLG ligand, plays a specialized role in activated but not naive T-cell trafficking during inflammatory responses. Controls thereby T-cell accumulation in the inflamed central nervous system (CNS) and the induction of autoimmune disease. Also regulates expression of various anti-inflammatory cytokines and co-inhibitory ligands including IL10. Acts as a regulator of T-cell proliferation. May play a role in kidney injury and repair. In terms of biological role, (Microbial infection) Acts as a receptor for Hepatitis A virus. (Microbial infection) Acts as a receptor for Ebolavirus and Marburg virus by binding exposed phosphatidyl-serine at the surface of virion membrane. Serves as a dual receptor for Ebolavirus by also interacting with envelope glycoprotein GP. Its function is as follows. (Microbial infection) Acts as a receptor for Dengue virus by binding exposed phosphatidyl-serine at the surface of virion membrane. TIM1 and Dengue virus are co-internalized during virus entry. Functionally, (Microbial infection) Acts as a receptor for Zika virus by binding to envelope protein E. In terms of biological role, (Microbial infection) Plays a positive role in Chikungunya virus cell entry. The polypeptide is Hepatitis A virus cellular receptor 1 (HAVCR1) (Homo sapiens (Human)).